Consider the following 106-residue polypeptide: NADH-quinone oxidoreductase subunit K (106 aa).

Helical transmembrane passes span 10–30, 35–55, and 67–87; these read IHYY…GVMV, VLIF…FVTF, and VVFF…AIVI.

The protein belongs to the complex I subunit 4L family. NDH-1 is composed of 14 different subunits. Subunits NuoA, H, J, K, L, M, N constitute the membrane sector of the complex.

It is found in the cell inner membrane. It carries out the reaction a quinone + NADH + 5 H(+)(in) = a quinol + NAD(+) + 4 H(+)(out). NDH-1 shuttles electrons from NADH, via FMN and iron-sulfur (Fe-S) centers, to quinones in the respiratory chain. The immediate electron acceptor for the enzyme in this species is believed to be ubiquinone. Couples the redox reaction to proton translocation (for every two electrons transferred, four hydrogen ions are translocated across the cytoplasmic membrane), and thus conserves the redox energy in a proton gradient. The chain is NADH-quinone oxidoreductase subunit K from Leptospira interrogans serogroup Icterohaemorrhagiae serovar copenhageni (strain Fiocruz L1-130).